The following is a 106-amino-acid chain: Small ribosomal subunit protein uS10 (106 aa).

The protein belongs to the universal ribosomal protein uS10 family. As to quaternary structure, part of the 30S ribosomal subunit.

Functionally, involved in the binding of tRNA to the ribosomes. The polypeptide is Small ribosomal subunit protein uS10 (Mycoplasma genitalium (strain ATCC 33530 / DSM 19775 / NCTC 10195 / G37) (Mycoplasmoides genitalium)).